We begin with the raw amino-acid sequence, 963 residues long: Phosphoenolpyruvate carboxylase (963 aa).

Ser-11 carries the phosphoserine modification. Catalysis depends on residues His-172 and Lys-600.

Belongs to the PEPCase type 1 family. Homotetramer. The cofactor is Mg(2+).

The protein resides in the cytoplasm. The catalysed reaction is oxaloacetate + phosphate = phosphoenolpyruvate + hydrogencarbonate. By light-reversible phosphorylation. In terms of biological role, through the carboxylation of phosphoenolpyruvate (PEP) it forms oxaloacetate, a four-carbon dicarboxylic acid source for the tricarboxylic acid cycle. The chain is Phosphoenolpyruvate carboxylase (PPC) from Picea abies (Norway spruce).